The following is a 319-amino-acid chain: MKKSITTLDLNLLLCLQLLMQERSVTKAAKRMNVTPSAVSKSLAKLRAWFDDPLFVNSPLGLSPTPLMVSMEQNLAEWMQMSNLLLDKPHHQTPRGLKFELAAESPLMMIMLNALSKQIYQRYPQATIKLRNWDYDSLDAITRGEVDIGFSGRESHPRSRELLSSLPLAIDYEVLFSDVPCVWLRKDHPALHEKWDLDTFLRYPHISICWEQSDTWALDNVLQELGRERTIAMSLPEFEQSLFMAAQPDNLLLATAPRYCQYYNQLHQLPLVALPLPFDESQQKKLEVPFTLLWHKRNSHNPKIVWLRDTIKNLYASMA.

Residues 8 to 65 (LDLNLLLCLQLLMQERSVTKAAKRMNVTPSAVSKSLAKLRAWFDDPLFVNSPLGLSPT) form the HTH lysR-type domain. The H-T-H motif DNA-binding region spans 25–44 (VTKAAKRMNVTPSAVSKSLA).

It belongs to the LysR transcriptional regulatory family.

In terms of biological role, involved in anaerobic NO protection. This is HTH-type transcriptional regulator YidZ from Escherichia coli O157:H7 (strain EC4115 / EHEC).